Here is a 416-residue protein sequence, read N- to C-terminus: Formyl-CoA:oxalate CoA-transferase (416 aa).

Residues 17-18 (QS), Arg38, 72-75 (LNTK), 96-98 (NFH), His104, and 137-140 (KAYE) contribute to the CoA site. Asp169 (nucleophile) is an active-site residue. 248 to 250 (GGQ) serves as a coordination point for substrate. 273-275 (QEQ) is a binding site for CoA.

It belongs to the CoA-transferase III family. Frc subfamily. Homodimer.

It catalyses the reaction formyl-CoA + oxalate = oxalyl-CoA + formate. It participates in metabolic intermediate degradation; oxalate degradation; CO(2) and formate from oxalate: step 1/2. Functionally, involved in the catabolism of oxalate and in the adapatation to low pH via the induction of the oxalate-dependent acid tolerance response (ATR). Catalyzes the transfer of the CoA moiety from formyl-CoA to oxalate. The sequence is that of Formyl-CoA:oxalate CoA-transferase from Escherichia coli (strain ATCC 8739 / DSM 1576 / NBRC 3972 / NCIMB 8545 / WDCM 00012 / Crooks).